The primary structure comprises 994 residues: E3 ubiquitin-protein ligase Arkadia (994 aa).

Residues K19, K28, K34, K47, K59, K73, K87, K96, and K110 each participate in a glycyl lysine isopeptide (Lys-Gly) (interchain with G-Cter in SUMO2) cross-link. Residues 66 to 89 (HLCDDSQKQEKEMNGNQQEQEKSL) are compositionally biased toward basic and acidic residues. The interval 66–106 (HLCDDSQKQEKEMNGNQQEQEKSLVVRKKRKSQQAGPSYVQ) is disordered. A disordered region spans residues 120-191 (QHLGTPSDED…HKWPRTETES (72 aa)). A compositionally biased stretch (low complexity) spans 132–151 (SSFSDCLSSPSSSLHFGDSD). Residues 164–173 (RHSQTILNAK) are compositionally biased toward polar residues. A Glycyl lysine isopeptide (Lys-Gly) (interchain with G-Cter in SUMO2) cross-link involves residue K173. The segment covering 174-184 (SRSHSARSHKW) has biased composition (basic residues). Residues K198 and K218 each participate in a glycyl lysine isopeptide (Lys-Gly) (interchain with G-Cter in SUMO2) cross-link. Residues 212 to 277 (CRKRFVKNNS…SSSTEGEEDL (66 aa)) are disordered. The segment covering 234–247 (MQRKKREVLARRKY) has biased composition (basic residues). The interval 241–404 (VLARRKYALL…VPTTSARMES (164 aa)) is interaction with AXIN1. A compositionally biased stretch (low complexity) spans 252–271 (SSSSSSENDLSSESSSSSST). Residues 300–304 (VVVIE) carry the SUMO interaction motif 1 (SIM) motif. The short motif at 325–331 (EVEIVTV) is the SUMO interaction motif 2 (SIM) element. Positions 337–371 (SRSTLGHSRSHWSQGSSSHASRPQEPRNRSRISTV) are disordered. Low complexity predominate over residues 347–357 (HWSQGSSSHAS). Residues 382–386 (VVDLT) carry the SUMO interaction motif 3 (SIM) motif. Disordered regions lie at residues 388–476 (DEDE…AMPR), 508–537 (HGHHFQHHHHHHHTPHPAVPVSPSFSDPAC), 610–684 (APSQ…VDYV), and 696–742 (ISSH…APPA). The segment covering 395–467 (VPTTSARMES…SRRTTSSAVT (73 aa)) has biased composition (polar residues). Residues 508–522 (HGHHFQHHHHHHHTP) are compositionally biased toward basic residues. The segment covering 670–680 (NPPPQTQPPPQ) has biased composition (pro residues). The segment at 907–909 (YPH) is ubiquitin binding. Glycyl lysine isopeptide (Lys-Gly) (interchain with G-Cter in SUMO2) cross-links involve residues K923 and K927. Zn(2+)-binding residues include C942 and C945. The segment at 942–983 (CTICLSILEEGEDVRRLPCMHLFHQVCVDQWLITNKKCPICR) adopts an RING-type; atypical zinc-finger fold. The tract at residues 957–961 (RLPCM) is ubiquitin binding. 2 residues coordinate Zn(2+): H965 and C968.

Belongs to the Arkadia family. As to quaternary structure, monomer. Interacts with SMAD6, SMAD7, AXIN1, AXIN2 and SKIL isoform SNON. Interacts with (phosphorylated) SMAD2 and SMAD3. Part of a complex containing RNF111, AXIN1 and SMAD7. Interacts (via SIM domains) with SUMO1 and SUMO2. As to expression, broadly expressed.

It localises to the nucleus. The protein localises to the cytoplasm. It is found in the PML body. It carries out the reaction S-ubiquitinyl-[E2 ubiquitin-conjugating enzyme]-L-cysteine + [acceptor protein]-L-lysine = [E2 ubiquitin-conjugating enzyme]-L-cysteine + N(6)-ubiquitinyl-[acceptor protein]-L-lysine.. Its pathway is protein modification; protein ubiquitination. With respect to regulation, binds free ubiquitin non-covalently via its RING-type zinc finger. Ubiquitin-binding leads to enhance the E3 ubiquitin-protein ligase activity by stabilizing the ubiquitin-conjugating enzyme E2 (donor ubiquitin) in the 'closed' conformation and activating ubiquitin transfer. Functionally, E3 ubiquitin-protein ligase. Required for mesoderm patterning during embryonic development. Acts as an enhancer of the transcriptional responses of the SMAD2/SMAD3 effectors, which are activated downstream of BMP. Acts by mediating ubiquitination and degradation of SMAD inhibitors such as SMAD7, inducing their proteasomal degradation and thereby enhancing the transcriptional activity of TGF-beta and BMP. In addition to enhance transcription of SMAD2/SMAD3 effectors, also regulates their turnover by mediating their ubiquitination and subsequent degradation, coupling their activation with degradation, thereby ensuring that only effectors 'in use' are degraded. Activates SMAD3/SMAD4-dependent transcription by triggering signal-induced degradation of SNON isoform of SKIL. Associates with UBE2D2 as an E2 enzyme. Specifically binds polysumoylated chains via SUMO interaction motifs (SIMs) and mediates ubiquitination of sumoylated substrates. Catalyzes 'Lys-63'-linked ubiquitination of sumoylated XPC in response to UV irradiation, promoting nucleotide excision repair. Mediates ubiquitination and degradation of sumoylated PML. The regulation of the BMP-SMAD signaling is however independent of sumoylation and is not dependent of SUMO interaction motifs (SIMs). The chain is E3 ubiquitin-protein ligase Arkadia from Homo sapiens (Human).